The primary structure comprises 393 residues: ATP phosphoribosyltransferase regulatory subunit (393 aa).

It belongs to the class-II aminoacyl-tRNA synthetase family. HisZ subfamily. In terms of assembly, heteromultimer composed of HisG and HisZ subunits.

The protein resides in the cytoplasm. Its pathway is amino-acid biosynthesis; L-histidine biosynthesis; L-histidine from 5-phospho-alpha-D-ribose 1-diphosphate: step 1/9. Its function is as follows. Required for the first step of histidine biosynthesis. May allow the feedback regulation of ATP phosphoribosyltransferase activity by histidine. In Synechococcus sp. (strain RCC307), this protein is ATP phosphoribosyltransferase regulatory subunit.